The chain runs to 195 residues: MEDIVIATNNQGKINDFKAIFKNQHVIGISELIEDFDVEETGATFEENARLKSEAAAHALNKRVIADDSGLEVFALNGEPGVYSARYAGLGKNDEDNIEKLLTNLEDVQDRRAQFVCVISMSAPNEKTKTFKGTVSGVITTERHGKNGFGYDPIFFVPELNKTMAEITNDEKGKISHRGNAIRLLKEYLEGEQHV.

A substrate-binding site is contributed by 8 to 13 (TNNQGK). Mg(2+) contacts are provided by glutamate 39 and aspartate 68. Aspartate 68 (proton acceptor) is an active-site residue. Residues serine 69, 149–152 (FGYD), lysine 172, and 177–178 (HR) each bind substrate.

This sequence belongs to the HAM1 NTPase family. As to quaternary structure, homodimer. It depends on Mg(2+) as a cofactor.

It carries out the reaction XTP + H2O = XMP + diphosphate + H(+). The enzyme catalyses dITP + H2O = dIMP + diphosphate + H(+). The catalysed reaction is ITP + H2O = IMP + diphosphate + H(+). Pyrophosphatase that catalyzes the hydrolysis of nucleoside triphosphates to their monophosphate derivatives, with a high preference for the non-canonical purine nucleotides XTP (xanthosine triphosphate), dITP (deoxyinosine triphosphate) and ITP. Seems to function as a house-cleaning enzyme that removes non-canonical purine nucleotides from the nucleotide pool, thus preventing their incorporation into DNA/RNA and avoiding chromosomal lesions. The polypeptide is dITP/XTP pyrophosphatase (Staphylococcus epidermidis (strain ATCC 12228 / FDA PCI 1200)).